The sequence spans 803 residues: Lon protease (803 aa).

One can recognise a Lon N-terminal domain in the interval 9–202; it reads MPVLPLRDVV…YLLGMMESEA (194 aa). 356–363 contacts ATP; it reads GPPGVGKT. Residues 592–773 enclose the Lon proteolytic domain; the sequence is QNRIGEVTGL…DEVLGFALEN (182 aa). Catalysis depends on residues serine 679 and lysine 722.

The protein belongs to the peptidase S16 family. Homohexamer. Organized in a ring with a central cavity.

Its subcellular location is the cytoplasm. It carries out the reaction Hydrolysis of proteins in presence of ATP.. Functionally, ATP-dependent serine protease that mediates the selective degradation of mutant and abnormal proteins as well as certain short-lived regulatory proteins. Required for cellular homeostasis and for survival from DNA damage and developmental changes induced by stress. Degrades polypeptides processively to yield small peptide fragments that are 5 to 10 amino acids long. Binds to DNA in a double-stranded, site-specific manner. The polypeptide is Lon protease (Haemophilus influenzae (strain ATCC 51907 / DSM 11121 / KW20 / Rd)).